The sequence spans 493 residues: MQEIMYLAPELVLVATGLVILLTGVFLSPQSKNILGYLATLGTLAAIFLTVKSFGLLTMEGFSVQYTIFSETLSIDALSQFFKLVFLAVALIVSIASIKYTENSDHTEEFYTLVLFATFGMMIVASANDLILLFCAFELASLATFALAGFEKQNARSLEGAMKYFVIGSVSAALMLFGLSFVYGATGTTSIPLIAQNPGLLTGNPIGIVAIVLLTAGFGFKMALVPFHMWAPDTYQGSPSVVSALLAAGSKKMGFVAAFRVFIIALAALQPDWQFMFTLLAVVTMTFGNVVAVAQTSVKRMLAYSSLAQAGYIAMAFAVMTPVALAGGIMYTLAHAFMKAGAFIAAAAVVWMITSEKTGNLDIPDHLDSFRGLGKRMPLAALCMTVFVFALAGIPPTAGFMAKFVLFSSTIQAGMTWLAVIAILNSALSLFYYARLVKYMYFMPPEGKTEKVSIPFPYAAALLVAVAGVLVMGLWPEPFVELAMKAAMVLVPF.

14 helical membrane passes run 7–27 (LAPE…GVFL), 34–54 (ILGY…VKSF), 78–98 (LSQF…IASI), 107–127 (TEEF…VASA), 130–150 (LILL…LAGF), 165–185 (FVIG…VYGA), 205–225 (PIGI…MALV), 244–264 (ALLA…VFII), 273–293 (WQFM…VVAV), 310–330 (AGYI…GGIM), 333–353 (LAHA…VWMI), 381–401 (ALCM…AGFM), 404–424 (FVLF…IAIL), and 454–474 (IPFP…VMGL).

The protein belongs to the complex I subunit 2 family. In terms of assembly, the FPO complex is composed of at least 13 different subunits. FpoA, FpoH, FpoJ, FpoK, FpoL, FpoM and FpoN proteins constitute the membrane sector of the complex.

The protein localises to the cell membrane. The catalysed reaction is methanophenazine + reduced coenzyme F420-(gamma-L-Glu)(n) = dihydromethanophenazine + oxidized coenzyme F420-(gamma-L-Glu)(n) + H(+). Functionally, component of the F(420)H(2) dehydrogenase (FPO complex) which is part of the energy-conserving F(420)H(2):heterodisulfide oxidoreductase system. The membrane-bound electron transfer system of the complex plays an important role in the metabolism of methylotrophic methanogens when the organisms grow on methanol or methylamines. Catalyzes the oxidation of methanophenazine to dihydromethanophenazine. It shuttles electrons from F(420)H(2), via FAD and iron-sulfur (Fe-S) centers, to methanophenazine (an electron carrier in the membrane). It couples the redox reaction to proton translocation (for every two electrons transferred, two hydrogen ions are translocated across the cytoplasmic membrane), and thus conserves the redox energy in a proton gradient. It also catalyzes the oxidation of F(420)H(2) with quinones such as 2,3-dimethyl-1,4-naphthoquinone, 2-methyl-1,4-naphthoquinone and tetramethyl-p-benzoquinone. The polypeptide is F(420)H(2) dehydrogenase subunit N (fpoN) (Methanosarcina mazei (strain ATCC BAA-159 / DSM 3647 / Goe1 / Go1 / JCM 11833 / OCM 88) (Methanosarcina frisia)).